Here is a 265-residue protein sequence, read N- to C-terminus: Acetylglutamate kinase (265 aa).

Residues 41–42, Arg63, and Asn156 contribute to the substrate site; that span reads GG.

It belongs to the acetylglutamate kinase family. ArgB subfamily.

It is found in the cytoplasm. The enzyme catalyses N-acetyl-L-glutamate + ATP = N-acetyl-L-glutamyl 5-phosphate + ADP. It functions in the pathway amino-acid biosynthesis; L-arginine biosynthesis; N(2)-acetyl-L-ornithine from L-glutamate: step 2/4. Functionally, catalyzes the ATP-dependent phosphorylation of N-acetyl-L-glutamate. The protein is Acetylglutamate kinase of Oceanobacillus iheyensis (strain DSM 14371 / CIP 107618 / JCM 11309 / KCTC 3954 / HTE831).